The chain runs to 110 residues: Bowman-Birk type proteinase inhibitor (110 aa).

The first 28 residues, 1–28 (MVLMNKKAIMKLALMLFLLGFTANVVDA), serve as a signal peptide directing secretion. A propeptide spanning residues 29–42 (RFDSTSFITQVLSN) is cleaved from the precursor. 7 disulfides stabilise this stretch: Cys-50-Cys-103, Cys-51-Cys-66, Cys-54-Cys-99, Cys-56-Cys-64, Cys-73-Cys-80, Cys-77-Cys-92, and Cys-82-Cys-90.

As to quaternary structure, monomer.

In terms of biological role, inhibitor of trypsin and of chymotrypsin. This is Bowman-Birk type proteinase inhibitor from Lens culinaris (Lentil).